Consider the following 646-residue polypeptide: bZIP transcription factor 39 (646 aa).

At 1 to 311 (MAEPALLDPT…KSKSKTKTKK (311 aa)) the chain is on the cytoplasmic side. The tract at residues 25–172 (HELPLAGGGG…GGTVCEEEED (148 aa)) is disordered. The span at 43 to 53 (LDGLEFDLPGD) shows a compositional bias: low complexity. Basic and acidic residues predominate over residues 59 to 69 (FLLRSPERDDS). Low complexity predominate over residues 71 to 98 (EGSAAGSGPTASPSSSPTTSASNSAVAN). A compositionally biased stretch (basic and acidic residues) spans 103–113 (EVKHEESDEGR). Residues 159–172 (DSDEGGTVCEEEED) are compositionally biased toward acidic residues. Residues 172-232 (DERRAARLMR…AENATLRQQL (61 aa)) enclose the bZIP domain. Residues 174-205 (RRAARLMRNRESAQLSRQRKKRYVEELEEKVK) form a basic motif region. A leucine-zipper region spans residues 211–218 (INDLNSRI). The segment at 272–308 (LVPIPRLKPQQPVPSSKVVKKPESKKTVENKSKSKTK) is disordered. Residues 279-288 (KPQQPVPSSK) are compositionally biased toward low complexity. Residues 291–303 (KKPESKKTVENKS) are compositionally biased toward basic and acidic residues. Residues 312-332 (VASVSLLGLLLIMLVFGAFIP) form a helical membrane-spanning segment. The Lumenal portion of the chain corresponds to 333-646 (GFNHNFGMCG…FKSSSPHLVN (314 aa)). N-linked (GlcNAc...) asparagine glycosylation is found at Asn-371, Asn-399, Asn-525, Asn-530, Asn-565, and Asn-571. The disordered stretch occupies residues 560-585 (TGKTANNTEPFNRTSESSSKLPDSKP). A compositionally biased stretch (polar residues) spans 562–585 (KTANNTEPFNRTSESSSKLPDSKP).

It belongs to the bZIP family. Highly expressed in leaf blade, and at lower levels in roots, leaf sheaths, flowers and seeds.

It is found in the endoplasmic reticulum membrane. The protein localises to the nucleus. In terms of biological role, transcription factor involved in endoplasmic reticulum (ER) stress response. Acts as a ER stress sensor and activates the transcription factor BZIP50 and the chaperone BIP1. The polypeptide is bZIP transcription factor 39 (Oryza sativa subsp. japonica (Rice)).